Reading from the N-terminus, the 434-residue chain is Cullin-like protein 5 (434 aa).

The tract at residues 1 to 34 is disordered; it reads MKRSISPDPFSSTKSPKLVHHSPDDGGAEGNPYR.

This sequence belongs to the cullin family.

This chain is Cullin-like protein 5, found in Arabidopsis thaliana (Mouse-ear cress).